The chain runs to 475 residues: F-box protein SKIP22 (475 aa).

Residues 114-133 (DQAKSNPNTSVEDPEGDISG) are disordered. The F-box domain maps to 319–365 (PPCLMRLPTELKLKILELLPGVSIGNMACVCTEMRYLASDNDLWKQK).

Part of a SCF (ASK-cullin-F-box) protein ligase complex. Interacts with SKP1A/ASK1 and SPK1B/ASK2.

The protein localises to the nucleus. Its pathway is protein modification; protein ubiquitination. Functionally, component of SCF(ASK-cullin-F-box) E3 ubiquitin ligase complexes, which may mediate the ubiquitination and subsequent proteasomal degradation of target proteins. The chain is F-box protein SKIP22 (SKIP22) from Arabidopsis thaliana (Mouse-ear cress).